A 250-amino-acid polypeptide reads, in one-letter code: GILT-like protein 1 (250 aa).

The N-terminal stretch at 1–21 (MSHKIAAVCLLMSCLIATAYS) is a signal peptide. The N-linked (GlcNAc...) asparagine glycan is linked to Asn157.

The protein belongs to the GILT family. In terms of processing, conjugated to URM1, a ubiquitin-like protein.

The protein resides in the secreted. Involved in the immune response to bacterial infection. This chain is GILT-like protein 1, found in Drosophila melanogaster (Fruit fly).